We begin with the raw amino-acid sequence, 265 residues long: Endochitinase At2g43580 (265 aa).

The first 24 residues, 1–24 (MALTKIFLILLLSLLGLYSETVKS), serve as a signal peptide directing secretion. Positions 25–59 (QNCDCAPNLCCSQFGYCGTTADYCGSTCQSGPCRV) constitute a Chitin-binding type-1 domain. Intrachain disulfides connect Cys-27–Cys-35, Cys-29–Cys-41, Cys-34–Cys-48, and Cys-52–Cys-57. The tract at residues 67–265 (GLVGNIVTQI…GLDPGANITC (199 aa)) is catalytic. Asn-102 carries an N-linked (GlcNAc...) asparagine glycan. The active-site Proton donor is Glu-129. The N-linked (GlcNAc...) asparagine glycan is linked to Asn-262.

This sequence belongs to the glycosyl hydrolase 19 family. Chitinase class I subfamily.

It catalyses the reaction Random endo-hydrolysis of N-acetyl-beta-D-glucosaminide (1-&gt;4)-beta-linkages in chitin and chitodextrins.. The sequence is that of Endochitinase At2g43580 from Arabidopsis thaliana (Mouse-ear cress).